A 402-amino-acid chain; its full sequence is Tryptophan synthase beta chain (402 aa).

Lys-91 is modified (N6-(pyridoxal phosphate)lysine).

This sequence belongs to the TrpB family. As to quaternary structure, tetramer of two alpha and two beta chains. Pyridoxal 5'-phosphate serves as cofactor.

It carries out the reaction (1S,2R)-1-C-(indol-3-yl)glycerol 3-phosphate + L-serine = D-glyceraldehyde 3-phosphate + L-tryptophan + H2O. Its pathway is amino-acid biosynthesis; L-tryptophan biosynthesis; L-tryptophan from chorismate: step 5/5. The beta subunit is responsible for the synthesis of L-tryptophan from indole and L-serine. In Streptococcus thermophilus (strain ATCC BAA-491 / LMD-9), this protein is Tryptophan synthase beta chain.